We begin with the raw amino-acid sequence, 273 residues long: tRNA (guanine-N(7)-)-methyltransferase (273 aa).

The span at 1–31 (MSQHPDINTNVDATSLTDDQKSLDTNATSGN) shows a compositional bias: polar residues. Residues 1-36 (MSQHPDINTNVDATSLTDDQKSLDTNATSGNEVAPD) are disordered. Residues E105, E130, D157, and D179 each coordinate S-adenosyl-L-methionine. The active site involves D179. Residues K183, D215, and 252–255 (TKFE) each bind substrate.

It belongs to the class I-like SAM-binding methyltransferase superfamily. TrmB family.

It carries out the reaction guanosine(46) in tRNA + S-adenosyl-L-methionine = N(7)-methylguanosine(46) in tRNA + S-adenosyl-L-homocysteine. It participates in tRNA modification; N(7)-methylguanine-tRNA biosynthesis. Its function is as follows. Catalyzes the formation of N(7)-methylguanine at position 46 (m7G46) in tRNA. In Psychrobacter cryohalolentis (strain ATCC BAA-1226 / DSM 17306 / VKM B-2378 / K5), this protein is tRNA (guanine-N(7)-)-methyltransferase.